The sequence spans 184 residues: Protein PLANT CADMIUM RESISTANCE 4 (184 aa).

The segment covering 1–10 has biased composition (polar residues); sequence MGRPGSQPNE. Residues 1 to 21 form a disordered region; sequence MGRPGSQPNEAQPPPVQVQPT. A helical membrane pass occupies residues 96–116; that stretch reads GGLLYGMIFFIGVPFVYSCMF.

Belongs to the cornifelin family.

The protein resides in the membrane. May be involved in heavy metals transport. The sequence is that of Protein PLANT CADMIUM RESISTANCE 4 (PCR4) from Arabidopsis thaliana (Mouse-ear cress).